We begin with the raw amino-acid sequence, 516 residues long: GMP synthase [glutamine-hydrolyzing] (516 aa).

In terms of domain architecture, Glutamine amidotransferase type-1 spans 7–199; sequence KIIILDFGSQ…VFGLCKCQAT (193 aa). The Nucleophile role is filled by Cys84. Active-site residues include His173 and Glu175. Positions 200–391 constitute a GMPS ATP-PPase domain; that stretch reads WTMQGFIESN…LGLPDEAVHR (192 aa). 227-233 contributes to the ATP binding site; it reads SGGVDSS.

As to quaternary structure, homodimer.

The enzyme catalyses XMP + L-glutamine + ATP + H2O = GMP + L-glutamate + AMP + diphosphate + 2 H(+). Its pathway is purine metabolism; GMP biosynthesis; GMP from XMP (L-Gln route): step 1/1. Functionally, catalyzes the synthesis of GMP from XMP. In Desulfotalea psychrophila (strain LSv54 / DSM 12343), this protein is GMP synthase [glutamine-hydrolyzing].